Consider the following 589-residue polypeptide: 3-(3-hydroxy-phenyl)propionate/3-hydroxycinnamic acid hydroxylase (589 aa).

Residues 15 to 44 (DVLIIGAGPVGLTLANTLGMAGVRVIVAEK) and 283 to 293 (FRVDRILLAGD) each bind FAD.

The protein belongs to the PheA/TfdB FAD monooxygenase family. FAD serves as cofactor.

It carries out the reaction 3-(3-hydroxyphenyl)propanoate + NADH + O2 + H(+) = 3-(2,3-dihydroxyphenyl)propanoate + NAD(+) + H2O. The enzyme catalyses (2E)-3-(3-hydroxyphenyl)prop-2-enoate + NADH + O2 + H(+) = (2E)-3-(2,3-dihydroxyphenyl)prop-2-enoate + NAD(+) + H2O. It participates in aromatic compound metabolism; 3-phenylpropanoate degradation. Functionally, catalyzes the insertion of one atom of molecular oxygen into position 2 of the phenyl ring of 3-(3-hydroxyphenyl)propionate (3-HPP) and hydroxycinnamic acid (3HCI). The chain is 3-(3-hydroxy-phenyl)propionate/3-hydroxycinnamic acid hydroxylase from Comamonas testosteroni (Pseudomonas testosteroni).